A 506-amino-acid polypeptide reads, in one-letter code: Nucleoside import ATP-binding protein NupA (506 aa).

ABC transporter domains lie at 7 to 242 (IQMI…VGRS) and 259 to 503 (LEIK…VGGN). Position 39–46 (39–46 (GENGAGKS)) interacts with ATP.

The protein belongs to the ABC transporter superfamily. The complex is composed of two ATP-binding proteins (NupA), two transmembrane proteins (NupB and NupC) and a solute-binding protein (BmpA).

Its subcellular location is the cell membrane. Functionally, part of an ABC transporter complex involved in the uptake of all common nucleosides. Responsible for energy coupling to the transport system. In Lactococcus lactis subsp. cremoris (strain MG1363), this protein is Nucleoside import ATP-binding protein NupA.